The sequence spans 547 residues: Probable bifunctional tRNA threonylcarbamoyladenosine biosynthesis protein (547 aa).

A kae1 region spans residues 1–329; the sequence is MDTSKDLICI…YRSDMVEVNW (329 aa). 3 residues coordinate Fe cation: His112, His116, and Tyr133. L-threonylcarbamoyladenylate contacts are provided by residues 133 to 137, Asp165, Gly178, Glu182, and Asn262; that span reads YVSGG. Asp290 serves as a coordination point for Fe cation. Residues 346–547 form the Protein kinase domain; it reads IIPEHLIGKG…KEVEKRARYL (202 aa). Residues 352–360 and Lys373 contribute to the ATP site; that span reads IGKGAEADI. Asp465 (proton acceptor; for kinase activity) is an active-site residue.

The protein in the N-terminal section; belongs to the KAE1 / TsaD family. This sequence in the C-terminal section; belongs to the protein kinase superfamily. Tyr protein kinase family. BUD32 subfamily. As to quaternary structure, component of the KEOPS complex that consists of Kae1, Bud32, Cgi121 and Pcc1; the whole complex dimerizes. The cofactor is Fe(2+).

The protein resides in the cytoplasm. It carries out the reaction L-seryl-[protein] + ATP = O-phospho-L-seryl-[protein] + ADP + H(+). The enzyme catalyses L-threonyl-[protein] + ATP = O-phospho-L-threonyl-[protein] + ADP + H(+). It catalyses the reaction L-threonylcarbamoyladenylate + adenosine(37) in tRNA = N(6)-L-threonylcarbamoyladenosine(37) in tRNA + AMP + H(+). In terms of biological role, required for the formation of a threonylcarbamoyl group on adenosine at position 37 (t(6)A37) in tRNAs that read codons beginning with adenine. Is a component of the KEOPS complex that is probably involved in the transfer of the threonylcarbamoyl moiety of threonylcarbamoyl-AMP (TC-AMP) to the N6 group of A37. The Kae1 domain likely plays a direct catalytic role in this reaction. The Bud32 domain probably displays kinase activity that regulates Kae1 function. The polypeptide is Probable bifunctional tRNA threonylcarbamoyladenosine biosynthesis protein (Methanococcus maripaludis (strain C7 / ATCC BAA-1331)).